The chain runs to 236 residues: Peptidyl-prolyl cis-trans isomerase CYP21-4 (236 aa).

A helical; Signal-anchor for type II membrane protein transmembrane segment spans residues 22–42 (ISISTIIVCNLVVAVVILSLV). The tract at residues 52-71 (SRNTIEHETRSQRFEDTNTA) is disordered. A compositionally biased stretch (basic and acidic residues) spans 54–67 (NTIEHETRSQRFED). In terms of domain architecture, PPIase cyclophilin-type spans 82-232 (FADINTSKGL…SPIGITGVVL (151 aa)). N-linked (GlcNAc...) asparagine glycosylation is present at Asn-86.

Belongs to the cyclophilin-type PPIase family. Ubiquitous.

The protein localises to the membrane. The catalysed reaction is [protein]-peptidylproline (omega=180) = [protein]-peptidylproline (omega=0). In terms of biological role, PPIases accelerate the folding of proteins. It catalyzes the cis-trans isomerization of proline imidic peptide bonds in oligopeptides. This chain is Peptidyl-prolyl cis-trans isomerase CYP21-4 (CYP21-4), found in Arabidopsis thaliana (Mouse-ear cress).